A 634-amino-acid polypeptide reads, in one-letter code: Extracellular metalloproteinase mep (634 aa).

The signal sequence occupies residues 1 to 18 (MRGLLLAGALALPASVFA). Positions 19 to 245 (HPAHQSYGLN…IHGVVDYVAE (227 aa)) are excised as a propeptide. N-linked (GlcNAc...) asparagine glycosylation is present at Asn-286. His-429 serves as a coordination point for Zn(2+). Residue Glu-430 is part of the active site. Position 433 (His-433) interacts with Zn(2+).

It belongs to the peptidase M36 family. It depends on Zn(2+) as a cofactor.

The protein localises to the secreted. In terms of biological role, secreted metalloproteinase that allows assimilation of proteinaceous substrates and probably acts as a virulence factor. The chain is Extracellular metalloproteinase mep (mep) from Aspergillus fumigatus (strain CBS 144.89 / FGSC A1163 / CEA10) (Neosartorya fumigata).